A 287-amino-acid chain; its full sequence is Mitochondrial dicarboxylate carrier (287 aa).

Solcar repeat units follow at residues 7–87, 100–187, and 196–279; these read SRWY…MRDY, NKVL…AKQL, and DNIF…LRKH. The next 3 helical transmembrane spans lie at 9 to 29, 62 to 81, and 102 to 122; these read WYFG…LDLL, GLSA…FAIY, and VLLG…ADLV. Lys158 is subject to N6-acetyllysine. The next 3 membrane-spanning stretches (helical) occupy residues 162-181, 202-222, and 254-274; these read GATM…LSCY, FVSS…LDVL, and GLFP…MFLE.

The protein belongs to the mitochondrial carrier (TC 2.A.29) family. In terms of tissue distribution, expressed at very high levels in white adipose tissue. And at low levels in brown adipose tissue, kidney and liver.

The protein resides in the mitochondrion inner membrane. It carries out the reaction (S)-malate(in) + phosphate(out) = (S)-malate(out) + phosphate(in). The enzyme catalyses malonate(out) + (S)-malate(in) = malonate(in) + (S)-malate(out). The catalysed reaction is (S)-malate(in) + succinate(out) = (S)-malate(out) + succinate(in). It catalyses the reaction (S)-malate(in) + sulfate(out) = (S)-malate(out) + sulfate(in). It carries out the reaction malonate(out) + phosphate(in) = malonate(in) + phosphate(out). The enzyme catalyses succinate(out) + phosphate(in) = succinate(in) + phosphate(out). The catalysed reaction is sulfate(out) + phosphate(in) = sulfate(in) + phosphate(out). It catalyses the reaction malonate(out) + succinate(in) = malonate(in) + succinate(out). Its activity is regulated as follows. Regulated by circadian protein CLOCK (Circadian Locomotor Output Cycles Kaput). Catalyzes the electroneutral exchange or flux of physiologically important metabolites such as dicarboxylates (malonate, malate, succinate), inorganic sulfur-containing anions, and phosphate, across mitochondrial inner membrane. Plays an important role in gluconeogenesis, fatty acid metabolism, urea synthesis, and sulfur metabolism, particularly in liver, by supplying the substrates for the different metabolic processes. Regulates fatty acid release from adipocytes, and contributes to systemic insulin sensitivity. This Mus musculus (Mouse) protein is Mitochondrial dicarboxylate carrier.